A 147-amino-acid polypeptide reads, in one-letter code: Vasopressin-neurophysin 2-copeptin (147 aa).

Cys-1 and Cys-6 form a disulfide bridge. Glycine amide is present on Gly-9. 7 disulfides stabilise this stretch: Cys-22/Cys-66, Cys-25/Cys-39, Cys-33/Cys-56, Cys-40/Cys-46, Cys-73/Cys-85, Cys-79/Cys-97, and Cys-86/Cys-91. A glycan (N-linked (GlcNAc...) asparagine) is linked at Asn-114.

The protein belongs to the vasopressin/oxytocin family. As to quaternary structure, interacts with vasopressin receptors V1bR/AVPR1B (Ki=85 pM), V1aR/AVPR1A (Ki=0.6 nM) and V2R/AVPR2 (Ki=4.9 nM). Interacts with oxytocin receptor (OXTR) (Ki=110 nM).

It is found in the secreted. In terms of biological role, neurophysin 2 specifically binds vasopressin. Functionally, vasopressin has a direct antidiuretic action on the kidney, it also causes vasoconstriction of the peripheral vessels. Acts by binding to vasopressin receptors (V1bR/AVPR1B, V1aR/AVPR1A, and V2R/AVPR2). In Ovis aries (Sheep), this protein is Vasopressin-neurophysin 2-copeptin (AVP).